We begin with the raw amino-acid sequence, 416 residues long: Phosphoglycerate kinase (416 aa).

Substrate-binding positions include 24-26 (DLN), Arg-40, 63-66 (HLGR), Arg-122, and Arg-162. Residues Lys-212, Gly-300, Glu-331, and 360 to 363 (GGDS) contribute to the ATP site.

This sequence belongs to the phosphoglycerate kinase family. In terms of assembly, monomer.

The protein localises to the cytoplasm. It catalyses the reaction (2R)-3-phosphoglycerate + ATP = (2R)-3-phospho-glyceroyl phosphate + ADP. It functions in the pathway carbohydrate degradation; glycolysis; pyruvate from D-glyceraldehyde 3-phosphate: step 2/5. This Mycobacterium ulcerans (strain Agy99) protein is Phosphoglycerate kinase.